The following is a 183-amino-acid chain: Hypoxanthine/guanine phosphoribosyltransferase (183 aa).

Belongs to the purine/pyrimidine phosphoribosyltransferase family. Archaeal HPRT subfamily. Homodimer.

Its subcellular location is the cytoplasm. It catalyses the reaction IMP + diphosphate = hypoxanthine + 5-phospho-alpha-D-ribose 1-diphosphate. The catalysed reaction is GMP + diphosphate = guanine + 5-phospho-alpha-D-ribose 1-diphosphate. It functions in the pathway purine metabolism; IMP biosynthesis via salvage pathway; IMP from hypoxanthine: step 1/1. Functionally, catalyzes a salvage reaction resulting in the formation of IMP that is energically less costly than de novo synthesis. This is Hypoxanthine/guanine phosphoribosyltransferase from Methanotorris igneus (strain DSM 5666 / JCM 11834 / Kol 5).